Here is a 457-residue protein sequence, read N- to C-terminus: tRNA (guanine(37)-N(1))-methyltransferase (457 aa).

Residues His225, 263–264, 291–292, and Asn358 each bind S-adenosyl-L-methionine; these read DL and DG.

The protein belongs to the class I-like SAM-binding methyltransferase superfamily. TRM5/TYW2 family. As to quaternary structure, monomer.

It is found in the mitochondrion matrix. The protein resides in the nucleus. Its subcellular location is the cytoplasm. It carries out the reaction guanosine(37) in tRNA + S-adenosyl-L-methionine = N(1)-methylguanosine(37) in tRNA + S-adenosyl-L-homocysteine + H(+). Functionally, specifically methylates the N1 position of guanosine-37 in various cytoplasmic and mitochondrial tRNAs. Methylation is not dependent on the nature of the nucleoside 5' of the target nucleoside. This is the first step in the biosynthesis of wybutosine (yW), a modified base adjacent to the anticodon of tRNAs and required for accurate decoding. The protein is tRNA (guanine(37)-N(1))-methyltransferase of Coprinopsis cinerea (strain Okayama-7 / 130 / ATCC MYA-4618 / FGSC 9003) (Inky cap fungus).